We begin with the raw amino-acid sequence, 319 residues long: Ribose-phosphate pyrophosphokinase (319 aa).

ATP is bound by residues 41–43 (NGE) and 100–101 (RQ). Residues His-134 and Asp-175 each contribute to the Mg(2+) site. Residue Lys-198 is part of the active site. Residues Arg-200, Asp-224, and 228-232 (DTAGS) contribute to the D-ribose 5-phosphate site.

It belongs to the ribose-phosphate pyrophosphokinase family. Class I subfamily. As to quaternary structure, homohexamer. Requires Mg(2+) as cofactor.

It localises to the cytoplasm. The catalysed reaction is D-ribose 5-phosphate + ATP = 5-phospho-alpha-D-ribose 1-diphosphate + AMP + H(+). It functions in the pathway metabolic intermediate biosynthesis; 5-phospho-alpha-D-ribose 1-diphosphate biosynthesis; 5-phospho-alpha-D-ribose 1-diphosphate from D-ribose 5-phosphate (route I): step 1/1. Involved in the biosynthesis of the central metabolite phospho-alpha-D-ribosyl-1-pyrophosphate (PRPP) via the transfer of pyrophosphoryl group from ATP to 1-hydroxyl of ribose-5-phosphate (Rib-5-P). In Clostridium acetobutylicum (strain ATCC 824 / DSM 792 / JCM 1419 / IAM 19013 / LMG 5710 / NBRC 13948 / NRRL B-527 / VKM B-1787 / 2291 / W), this protein is Ribose-phosphate pyrophosphokinase.